The sequence spans 231 residues: NADH-ubiquinone oxidoreductase chain 4 (231 aa).

6 helical membrane passes run 1-21 (PIAG…YGII), 34-54 (TFLP…LTCL), 61-80 (SLIA…AIII), 84-106 (WGLS…LFCL), 118-138 (ILIL…WWLL), and 156-178 (LLIM…LSML).

It belongs to the complex I subunit 4 family.

Its subcellular location is the mitochondrion membrane. The enzyme catalyses a ubiquinone + NADH + 5 H(+)(in) = a ubiquinol + NAD(+) + 4 H(+)(out). Core subunit of the mitochondrial membrane respiratory chain NADH dehydrogenase (Complex I) that is believed to belong to the minimal assembly required for catalysis. Complex I functions in the transfer of electrons from NADH to the respiratory chain. The immediate electron acceptor for the enzyme is believed to be ubiquinone. This is NADH-ubiquinone oxidoreductase chain 4 (MT-ND4) from Trimeresurus albolabris (White-lipped pit viper).